A 234-amino-acid chain; its full sequence is 2-amino-5-formylamino-6-ribosylaminopyrimidin-4(3H)-one 5'-monophosphate deformylase (234 aa).

Fe cation-binding residues include Glu-29, His-31, Asp-40, and His-109.

Belongs to the creatininase superfamily. FAPy deformylase family. As to quaternary structure, homodimer. Fe(2+) is required as a cofactor. Zn(2+) serves as cofactor.

The enzyme catalyses 2-amino-5-formylamino-6-(5-phospho-D-ribosylamino)pyrimidin-4(3H)-one + H2O = 2,5-diamino-6-(1-D-ribosylamino)pyrimidin-4(3H)-one 5'-phosphate + formate + H(+). It functions in the pathway cofactor biosynthesis; coenzyme F420 biosynthesis. Its pathway is cofactor biosynthesis; riboflavin biosynthesis. In terms of biological role, catalyzes the hydrolysis of the formamide of 2-amino-5-formylamino-6-ribosylamino-4(3H)-pyrimidinone 5'-monophosphate (FAPy) to form 2,5-diamino-6-ribosylamino-4(3H)-pyrimidinone 5'-phosphate (APy). This chain is 2-amino-5-formylamino-6-ribosylaminopyrimidin-4(3H)-one 5'-monophosphate deformylase, found in Methanobrevibacter ruminantium (strain ATCC 35063 / DSM 1093 / JCM 13430 / OCM 146 / M1) (Methanobacterium ruminantium).